Here is a 171-residue protein sequence, read N- to C-terminus: Large ribosomal subunit protein uL10 (171 aa).

It belongs to the universal ribosomal protein uL10 family. In terms of assembly, part of the ribosomal stalk of the 50S ribosomal subunit. The N-terminus interacts with L11 and the large rRNA to form the base of the stalk. The C-terminus forms an elongated spine to which L12 dimers bind in a sequential fashion forming a multimeric L10(L12)X complex.

In terms of biological role, forms part of the ribosomal stalk, playing a central role in the interaction of the ribosome with GTP-bound translation factors. This is Large ribosomal subunit protein uL10 from Cereibacter sphaeroides (strain ATCC 17023 / DSM 158 / JCM 6121 / CCUG 31486 / LMG 2827 / NBRC 12203 / NCIMB 8253 / ATH 2.4.1.) (Rhodobacter sphaeroides).